The chain runs to 593 residues: UvrABC system protein C (593 aa).

Residues 17–94 (MEPGCYLMKD…IKQYQPRYNI (78 aa)) enclose the GIY-YIG domain. The UVR domain maps to 199 to 234 (KTILKSLEERMLTASESLDFERAKEYRDLIQHIQNL).

This sequence belongs to the UvrC family. In terms of assembly, interacts with UvrB in an incision complex.

It localises to the cytoplasm. In terms of biological role, the UvrABC repair system catalyzes the recognition and processing of DNA lesions. UvrC both incises the 5' and 3' sides of the lesion. The N-terminal half is responsible for the 3' incision and the C-terminal half is responsible for the 5' incision. The protein is UvrABC system protein C of Staphylococcus aureus (strain USA300).